A 491-amino-acid chain; its full sequence is Aspartyl/glutamyl-tRNA(Asn/Gln) amidotransferase subunit B (491 aa).

Belongs to the GatB/GatE family. GatB subfamily. Heterotrimer of A, B and C subunits.

It catalyses the reaction L-glutamyl-tRNA(Gln) + L-glutamine + ATP + H2O = L-glutaminyl-tRNA(Gln) + L-glutamate + ADP + phosphate + H(+). The catalysed reaction is L-aspartyl-tRNA(Asn) + L-glutamine + ATP + H2O = L-asparaginyl-tRNA(Asn) + L-glutamate + ADP + phosphate + 2 H(+). Functionally, allows the formation of correctly charged Asn-tRNA(Asn) or Gln-tRNA(Gln) through the transamidation of misacylated Asp-tRNA(Asn) or Glu-tRNA(Gln) in organisms which lack either or both of asparaginyl-tRNA or glutaminyl-tRNA synthetases. The reaction takes place in the presence of glutamine and ATP through an activated phospho-Asp-tRNA(Asn) or phospho-Glu-tRNA(Gln). This Prochlorococcus marinus (strain NATL2A) protein is Aspartyl/glutamyl-tRNA(Asn/Gln) amidotransferase subunit B.